Consider the following 214-residue polypeptide: ATP-dependent Clp protease proteolytic subunit (214 aa).

Ser106 serves as the catalytic Nucleophile. His131 is an active-site residue.

This sequence belongs to the peptidase S14 family. As to quaternary structure, fourteen ClpP subunits assemble into 2 heptameric rings which stack back to back to give a disk-like structure with a central cavity, resembling the structure of eukaryotic proteasomes.

The protein localises to the cytoplasm. The catalysed reaction is Hydrolysis of proteins to small peptides in the presence of ATP and magnesium. alpha-casein is the usual test substrate. In the absence of ATP, only oligopeptides shorter than five residues are hydrolyzed (such as succinyl-Leu-Tyr-|-NHMec, and Leu-Tyr-Leu-|-Tyr-Trp, in which cleavage of the -Tyr-|-Leu- and -Tyr-|-Trp bonds also occurs).. Functionally, cleaves peptides in various proteins in a process that requires ATP hydrolysis. Has a chymotrypsin-like activity. Plays a major role in the degradation of misfolded proteins. This is ATP-dependent Clp protease proteolytic subunit from Rhodopseudomonas palustris (strain BisB5).